A 227-amino-acid polypeptide reads, in one-letter code: Cytochrome c oxidase subunit 2 (227 aa).

The Mitochondrial intermembrane portion of the chain corresponds to 1 to 14 (MAYPFQLGLQDATS). A helical membrane pass occupies residues 15–45 (PIMEELMNFHDHTLMIVFLISTLVLYIISLM). Topologically, residues 46 to 59 (LTTKLTHTSTMDAQ) are mitochondrial matrix. Residues 60–87 (EVETIWTILPAVILILIALPSLRILYMM) traverse the membrane as a helical segment. Residues 88–227 (DEINNPALTV…YFENWSASMI (140 aa)) are Mitochondrial intermembrane-facing. Residues His161, Cys196, Glu198, Cys200, His204, and Met207 each contribute to the Cu cation site. Glu198 provides a ligand contact to Mg(2+). Tyr218 is subject to Phosphotyrosine.

Belongs to the cytochrome c oxidase subunit 2 family. Component of the cytochrome c oxidase (complex IV, CIV), a multisubunit enzyme composed of 14 subunits. The complex is composed of a catalytic core of 3 subunits MT-CO1, MT-CO2 and MT-CO3, encoded in the mitochondrial DNA, and 11 supernumerary subunits COX4I, COX5A, COX5B, COX6A, COX6B, COX6C, COX7A, COX7B, COX7C, COX8 and NDUFA4, which are encoded in the nuclear genome. The complex exists as a monomer or a dimer and forms supercomplexes (SCs) in the inner mitochondrial membrane with NADH-ubiquinone oxidoreductase (complex I, CI) and ubiquinol-cytochrome c oxidoreductase (cytochrome b-c1 complex, complex III, CIII), resulting in different assemblies (supercomplex SCI(1)III(2)IV(1) and megacomplex MCI(2)III(2)IV(2)). Found in a complex with TMEM177, COA6, COX18, COX20, SCO1 and SCO2. Interacts with TMEM177 in a COX20-dependent manner. Interacts with COX20. Interacts with COX16. The cofactor is Cu cation.

The protein localises to the mitochondrion inner membrane. The enzyme catalyses 4 Fe(II)-[cytochrome c] + O2 + 8 H(+)(in) = 4 Fe(III)-[cytochrome c] + 2 H2O + 4 H(+)(out). Its function is as follows. Component of the cytochrome c oxidase, the last enzyme in the mitochondrial electron transport chain which drives oxidative phosphorylation. The respiratory chain contains 3 multisubunit complexes succinate dehydrogenase (complex II, CII), ubiquinol-cytochrome c oxidoreductase (cytochrome b-c1 complex, complex III, CIII) and cytochrome c oxidase (complex IV, CIV), that cooperate to transfer electrons derived from NADH and succinate to molecular oxygen, creating an electrochemical gradient over the inner membrane that drives transmembrane transport and the ATP synthase. Cytochrome c oxidase is the component of the respiratory chain that catalyzes the reduction of oxygen to water. Electrons originating from reduced cytochrome c in the intermembrane space (IMS) are transferred via the dinuclear copper A center (CU(A)) of subunit 2 and heme A of subunit 1 to the active site in subunit 1, a binuclear center (BNC) formed by heme A3 and copper B (CU(B)). The BNC reduces molecular oxygen to 2 water molecules using 4 electrons from cytochrome c in the IMS and 4 protons from the mitochondrial matrix. The sequence is that of Cytochrome c oxidase subunit 2 (MT-CO2) from Maxomys surifer (Indomalayan maxomys).